The following is a 43-amino-acid chain: S-layer protein 1 (43 aa).

The protein localises to the secreted. The protein resides in the cell wall. Its subcellular location is the S-layer. Its function is as follows. The S-layer is a paracrystalline mono-layered assembly of proteins which coat the surface of bacteria. The sequence is that of S-layer protein 1 from Bacillus thuringiensis subsp. konkukian.